The primary structure comprises 123 residues: Large ribosomal subunit protein uL14 (123 aa).

Belongs to the universal ribosomal protein uL14 family. Part of the 50S ribosomal subunit. Forms a cluster with proteins L3 and L19. In the 70S ribosome, L14 and L19 interact and together make contacts with the 16S rRNA in bridges B5 and B8.

Functionally, binds to 23S rRNA. Forms part of two intersubunit bridges in the 70S ribosome. This is Large ribosomal subunit protein uL14 from Actinobacillus pleuropneumoniae serotype 7 (strain AP76).